The following is a 643-amino-acid chain: Protein disulfide-isomerase A4 (643 aa).

The signal sequence occupies residues 1 to 20; the sequence is MKLRKAWLLVLLLALTQLLA. Thioredoxin domains follow at residues 21–167 and 167–299; these read AASA…EVSQ and QPDW…EFLK. Residues 24–58 are disordered; sequence AEDAHEDASDSENPIEDDDDEEEDEEDEDDLEVKE. Residues 32 to 56 show a composition bias toward acidic residues; sequence SDSENPIEDDDDEEEDEEDEDDLEV. A CXXC motif is present at residues 89–92; that stretch reads CGHC. 2 disulfides stabilise this stretch: cysteine 89-cysteine 92 and cysteine 204-cysteine 207. Position 364 is an N6-acetyllysine (lysine 364). Residues 503 to 634 enclose the Thioredoxin 3 domain; the sequence is FKKGKLKPVI…LSKFIDEHAT (132 aa). The CXXC motif lies at 553-556; the sequence is CGHC. Cysteine 553 and cysteine 556 form a disulfide bridge. Positions 640–643 match the Prevents secretion from ER motif; the sequence is KEEL.

The protein belongs to the protein disulfide isomerase family. As to quaternary structure, part of a large chaperone multiprotein complex comprising DNAJB11, HSP90B1, HSPA5, HYOU, PDIA2, PDIA4, PDIA6, PPIB, SDF2L1, UGGT1 and very small amounts of ERP29, but not, or at very low levels, CALR nor CANX. Component of a complex containing at least CRELD2, MANF, MATN3 and PDIA4. O-glycosylated.

The protein resides in the endoplasmic reticulum lumen. It is found in the melanosome. The catalysed reaction is Catalyzes the rearrangement of -S-S- bonds in proteins.. This is Protein disulfide-isomerase A4 (Pdia4) from Rattus norvegicus (Rat).